We begin with the raw amino-acid sequence, 508 residues long: Light-independent protochlorophyllide reductase subunit B (508 aa).

Residue aspartate 36 coordinates [4Fe-4S] cluster. Residue aspartate 294 is the Proton donor of the active site. A substrate-binding site is contributed by 429–430 (GM).

It belongs to the ChlB/BchB/BchZ family. As to quaternary structure, protochlorophyllide reductase is composed of three subunits; ChlL, ChlN and ChlB. Forms a heterotetramer of two ChlB and two ChlN subunits. The cofactor is [4Fe-4S] cluster.

The enzyme catalyses chlorophyllide a + oxidized 2[4Fe-4S]-[ferredoxin] + 2 ADP + 2 phosphate = protochlorophyllide a + reduced 2[4Fe-4S]-[ferredoxin] + 2 ATP + 2 H2O. It functions in the pathway porphyrin-containing compound metabolism; chlorophyll biosynthesis (light-independent). Functionally, component of the dark-operative protochlorophyllide reductase (DPOR) that uses Mg-ATP and reduced ferredoxin to reduce ring D of protochlorophyllide (Pchlide) to form chlorophyllide a (Chlide). This reaction is light-independent. The NB-protein (ChlN-ChlB) is the catalytic component of the complex. The polypeptide is Light-independent protochlorophyllide reductase subunit B (Acaryochloris marina (strain MBIC 11017)).